The following is a 470-amino-acid chain: UDP-glycosyltransferase 72D1 (470 aa).

Residues serine 276, 343–345, 360–368, and 382–385 each bind UDP-alpha-D-glucose; these read APQ, HCGWSSALE, and YAEQ.

Belongs to the UDP-glycosyltransferase family.

The sequence is that of UDP-glycosyltransferase 72D1 (UGT72D1) from Arabidopsis thaliana (Mouse-ear cress).